A 56-amino-acid chain; its full sequence is Large ribosomal subunit protein bL32 (56 aa).

The segment at 1 to 37 (MAVQQNKKSRSKRGMRRSHDALSTAQLSVDATSGELH) is disordered. The span at 7–16 (KKSRSKRGMR) shows a compositional bias: basic residues. Over residues 21-31 (ALSTAQLSVDA) the composition is skewed to polar residues.

This sequence belongs to the bacterial ribosomal protein bL32 family.

The protein is Large ribosomal subunit protein bL32 of Shewanella pealeana (strain ATCC 700345 / ANG-SQ1).